The primary structure comprises 156 residues: MQKRLIEKLAENKRRLLMSEIKEKLVPCAERGFTYRFADLAQSRQLLELVLSNSIPANTREVDALEKTEAKQLIWKISQSYVAYDDRDVLLFHQYSSEIGALVCSFGKCLEHLDCLLECIEFDEGILNHSFILVEPKCQFGLCILHTEYGCELVYW.

This is an uncharacterized protein from Bacillus subtilis (strain 168).